The following is a 380-amino-acid chain: Endopolygalacturonase AN8327 (380 aa).

A signal peptide spans 1 to 19 (MFYALGPLALFAFATEVMA). Residues 20-35 (TPVAYPMTTASPTLAK) constitute a propeptide that is removed on maturation. Cys39 and Cys57 form a disulfide bridge. PbH1 repeat units follow at residues 147-169 (LTDSTIQNLYIENTPVQAVSING), 170-200 (CDGLTITDMTIDNSAGDDAGGHNTDGFDIGE), 201-222 (SSNVVITGAKVYNQDDCVAVNS), 223-243 (GTSITFSGGTCSGGHGLSIGS), 252-273 (VDTVTFKDSTVSNSVNGIRIKA), 281-303 (IKGVTYSGISLESISDYGILIEQ), and 315-338 (TSGIPITDLTIENISGSGAVDSDG). Asp215 serves as the catalytic Proton donor. Residues Cys217 and Cys233 are joined by a disulfide bond. His237 is an active-site residue. N-linked (GlcNAc...) asparagine glycosylation is present at Asn327. An intrachain disulfide couples Cys345 to Cys350. A glycan (N-linked (GlcNAc...) asparagine) is linked at Asn352. A disulfide bridge links Cys369 with Cys378.

It belongs to the glycosyl hydrolase 28 family.

The protein resides in the secreted. It catalyses the reaction (1,4-alpha-D-galacturonosyl)n+m + H2O = (1,4-alpha-D-galacturonosyl)n + (1,4-alpha-D-galacturonosyl)m.. Involved in maceration and soft-rotting of plant tissue. Hydrolyzes the 1,4-alpha glycosidic bonds of de-esterified pectate in the smooth region of the plant cell wall. The sequence is that of Endopolygalacturonase AN8327 from Emericella nidulans (strain FGSC A4 / ATCC 38163 / CBS 112.46 / NRRL 194 / M139) (Aspergillus nidulans).